The sequence spans 281 residues: Undecaprenyl-diphosphatase (281 aa).

8 helical membrane-spanning segments follow: residues 5–25, 48–68, 92–112, 118–138, 154–174, 192–212, 226–246, and 261–281; these read LFVL…FLPI, VKMY…LLYW, FWFM…LLDA, LMTP…MIYA, VTPK…IPGM, VVAA…YSLL, AELI…VAVI, and FAIY…MGFF.

The protein belongs to the UppP family.

It localises to the cell membrane. The catalysed reaction is di-trans,octa-cis-undecaprenyl diphosphate + H2O = di-trans,octa-cis-undecaprenyl phosphate + phosphate + H(+). Catalyzes the dephosphorylation of undecaprenyl diphosphate (UPP). Confers resistance to bacitracin. The polypeptide is Undecaprenyl-diphosphatase (Ruminiclostridium cellulolyticum (strain ATCC 35319 / DSM 5812 / JCM 6584 / H10) (Clostridium cellulolyticum)).